The primary structure comprises 467 residues: Glutamate--tRNA ligase (467 aa).

The 'HIGH' region motif lies at 15 to 25 (PSPTGYLHVGG). The 'KMSKS' region signature appears at 249 to 253 (KLSKR). Residue K252 coordinates ATP.

Belongs to the class-I aminoacyl-tRNA synthetase family. Glutamate--tRNA ligase type 1 subfamily. Monomer.

It is found in the cytoplasm. It carries out the reaction tRNA(Glu) + L-glutamate + ATP = L-glutamyl-tRNA(Glu) + AMP + diphosphate. Its function is as follows. Catalyzes the attachment of glutamate to tRNA(Glu) in a two-step reaction: glutamate is first activated by ATP to form Glu-AMP and then transferred to the acceptor end of tRNA(Glu). The polypeptide is Glutamate--tRNA ligase (Coprothermobacter proteolyticus (strain ATCC 35245 / DSM 5265 / OCM 4 / BT)).